Consider the following 210-residue polypeptide: Placenta-expressed transcript 1 protein (210 aa).

An N-terminal signal peptide occupies residues 1–26; the sequence is MAVLGSPLLPLRLFLCFGLLFFSASC. Over 27–189 the chain is Extracellular; that stretch reads TDHPDQCMIF…THKNSANRVF (163 aa). N-linked (GlcNAc...) asparagine glycosylation is found at asparagine 67 and asparagine 94. The chain crosses the membrane as a helical span at residues 190-209; it reads RSPVRDAIQILLAFLTSKLL. Residue phenylalanine 210 is a topological domain, cytoplasmic.

As to expression, highly expressed in placenta.

Its subcellular location is the membrane. The protein resides in the apical cell membrane. Functionally, modulates leading keratinocyte migration and cellular adhesion to matrix proteins during a wound-healing response and promotes wound repair. May play a role during trichilemmal differentiation of the hair follicle. In Sus scrofa (Pig), this protein is Placenta-expressed transcript 1 protein (PLET1).